We begin with the raw amino-acid sequence, 252 residues long: Ribosomal RNA small subunit methyltransferase J (252 aa).

S-adenosyl-L-methionine-binding positions include 126–127 (ER) and D176.

This sequence belongs to the methyltransferase superfamily. RsmJ family.

Its subcellular location is the cytoplasm. The enzyme catalyses guanosine(1516) in 16S rRNA + S-adenosyl-L-methionine = N(2)-methylguanosine(1516) in 16S rRNA + S-adenosyl-L-homocysteine + H(+). In terms of biological role, specifically methylates the guanosine in position 1516 of 16S rRNA. This chain is Ribosomal RNA small subunit methyltransferase J, found in Bdellovibrio bacteriovorus (strain ATCC 15356 / DSM 50701 / NCIMB 9529 / HD100).